Reading from the N-terminus, the 251-residue chain is Gamma-glutamyl peptidase 5 (251 aa).

Residues 17 to 214 (STFVKKAYGG…IDRVVNLKLM (198 aa)) form the Glutamine amidotransferase type-1 domain. Cys101 acts as the Nucleophile in catalysis. Active-site residues include His193 and Glu195.

It belongs to the peptidase C26 family.

Its subcellular location is the cytoplasm. The protein localises to the cytosol. It functions in the pathway secondary metabolite biosynthesis. Functionally, involved in glucosinolate biosynthesis. Hydrolyzes the gamma-glutamyl peptide bond of several glutathione (GSH) conjugates to produce Cys-Gly conjugates related to glucosinolates. The gamma-Glu-Cys-Gly-GSH conjugates are the sulfur-donating molecule in glucosinolate biosynthesis. The chain is Gamma-glutamyl peptidase 5 from Arabidopsis thaliana (Mouse-ear cress).